Reading from the N-terminus, the 83-residue chain is Cobrotoxin homolog (83 aa).

The first 21 residues, 1-21 (METLLLTLLVVTIVCLDLGYT), serve as a signal peptide directing secretion. 4 disulfide bridges follow: cysteine 24/cysteine 45, cysteine 38/cysteine 62, cysteine 64/cysteine 75, and cysteine 76/cysteine 81.

The protein belongs to the three-finger toxin family. Short-chain subfamily. Type I alpha-neurotoxin sub-subfamily. In terms of tissue distribution, expressed by the venom gland.

The protein resides in the secreted. In terms of biological role, binds to muscle nicotinic acetylcholine receptor (nAChR) and inhibit acetylcholine from binding to the receptor, thereby impairing neuromuscular transmission. The polypeptide is Cobrotoxin homolog (Naja naja (Indian cobra)).